Consider the following 421-residue polypeptide: UDP-N-acetylglucosamine 1-carboxyvinyltransferase (421 aa).

26 to 27 (KN) is a phosphoenolpyruvate binding site. R96 serves as a coordination point for UDP-N-acetyl-alpha-D-glucosamine. D120 (proton donor) is an active-site residue. UDP-N-acetyl-alpha-D-glucosamine contacts are provided by D308 and V330.

It belongs to the EPSP synthase family. MurA subfamily.

The protein localises to the cytoplasm. The enzyme catalyses phosphoenolpyruvate + UDP-N-acetyl-alpha-D-glucosamine = UDP-N-acetyl-3-O-(1-carboxyvinyl)-alpha-D-glucosamine + phosphate. The protein operates within cell wall biogenesis; peptidoglycan biosynthesis. In terms of biological role, cell wall formation. Adds enolpyruvyl to UDP-N-acetylglucosamine. This Corynebacterium efficiens (strain DSM 44549 / YS-314 / AJ 12310 / JCM 11189 / NBRC 100395) protein is UDP-N-acetylglucosamine 1-carboxyvinyltransferase.